The following is a 129-amino-acid chain: uncharacterized protein (129 aa).

To M.pneumoniae MPN_376 N-terminal region.

This is an uncharacterized protein from Mycoplasma pneumoniae (strain ATCC 29342 / M129 / Subtype 1) (Mycoplasmoides pneumoniae).